A 516-amino-acid chain; its full sequence is MADGDGSSVKKRRKKDKRSLPDEDVADIQHTEEFLIKPESRVAQLDTSQWPLLLKNFDKLNVLTTHYTPLPSGANPLKREISDYVRSGFINLDKPSNPSSHEVVAWIRRILRVEKTGHSGTLDPKVTGCLIVCIERATRLVKSQQSAGKEYVGIVRLHNAIESEAQLARAIETLTGALFQRPPLIAAVKRQLRVRTIYESKLVEYDPERRLGIFWVSCEAGTYIRTLCVHLGLLLGVGGQMQELRRVRSGILGEMDNMVTMHDVLDAQWQYDNNKDDSYLRRVILPLEKLLTSHKRLVMKDSAVNAICYGAKIMLPGVLRYEDGIELKQEIVVITTKGEAICLAIALMTTAVISTCDHGVVAKIKRVIMERDTYPRKWGLGPKASQKKMMIQKGLLDKHGKPNECTPDSWKKEYVDYRESSKKEAAKVPQAVSEVERAPKRKRESESENEAVSPPPSPATPPPEELSKKEKKKKKKEKKAKEAAESGEEQVEVISESSAKKKKKKKKQKEVEESSE.

Residues 1–24 (MADGDGSSVKKRRKKDKRSLPDED) are disordered. Catalysis depends on D123, which acts as the Nucleophile. Positions 294 to 369 (HKRLVMKDSA…VVAKIKRVIM (76 aa)) constitute a PUA domain. The tract at residues 422-516 (KKEAAKVPQA…KQKEVEESSE (95 aa)) is disordered. Over residues 434–446 (EVERAPKRKRESE) the composition is skewed to basic and acidic residues. The segment covering 453–464 (SPPPSPATPPPE) has biased composition (pro residues). Residues 463-516 (PEELSKKEKKKKKKEKKAKEAAESGEEQVEVISESSAKKKKKKKKQKEVEESSE) are a coiled coil. Positions 469 to 478 (KEKKKKKKEK) are enriched in basic residues.

Belongs to the pseudouridine synthase TruB family. As to quaternary structure, part of the H/ACA small nucleolar ribonucleoprotein (H/ACA snoRNP) complex, which contains NHP2/NOLA2, GAR1/NOLA1, NOP10/NOLA3, and DKC1/NOLA4, which is presumed to be the catalytic subunit. The complex contains a stable core formed by binding of one or two NOP10-DKC1 heterodimers to NHP2; GAR1 subsequently binds to this core via DKC1. The complex binds a box H/ACA small nucleolar RNA (snoRNA), which may target the specific site of modification within the RNA substrate.

The protein localises to the nucleus. Its subcellular location is the nucleolus. It is found in the cajal body. The catalysed reaction is uridine in 5S rRNA = pseudouridine in 5S rRNA. Catalytic subunit of H/ACA small nucleolar ribonucleoprotein (H/ACA snoRNP) complex, which catalyzes pseudouridylation of rRNA. This involves the isomerization of uridine such that the ribose is subsequently attached to C5, instead of the normal N1. Each rRNA can contain up to 100 pseudouridine ('psi') residues, which may serve to stabilize the conformation of rRNAs. Required for ribosome biogenesis and telomere maintenance. The chain is H/ACA ribonucleoprotein complex subunit DKC1 (DKC1) from Gallus gallus (Chicken).